The chain runs to 186 residues: Large ribosomal subunit protein uL5 (186 aa).

This sequence belongs to the universal ribosomal protein uL5 family. In terms of assembly, part of the 50S ribosomal subunit; contacts the 5S rRNA and probably tRNA. Forms a bridge to the 30S subunit in the 70S ribosome.

Its function is as follows. This is one of the proteins that bind and probably mediate the attachment of the 5S RNA into the large ribosomal subunit, where it forms part of the central protuberance. In the 70S ribosome it contacts protein S13 of the 30S subunit (bridge B1b), connecting the 2 subunits; this bridge is implicated in subunit movement. May contact the P site tRNA; the 5S rRNA and some of its associated proteins might help stabilize positioning of ribosome-bound tRNAs. In Pyrococcus furiosus (strain ATCC 43587 / DSM 3638 / JCM 8422 / Vc1), this protein is Large ribosomal subunit protein uL5.